The sequence spans 418 residues: Translation initiation factor 2 subunit gamma (418 aa).

The region spanning 7 to 206 (QPEVNIGVVG…GIQKYIPTPQ (200 aa)) is the tr-type G domain. The G1 stretch occupies residues 16–23 (GHVDHGKT). Residues aspartate 19, threonine 23, glycine 44, and threonine 46 each coordinate Mg(2+). Position 19 to 24 (19 to 24 (DHGKTT)) interacts with GTP. The tract at residues 44–48 (GMTIK) is G2. The Zn(2+) site is built by cysteine 59, cysteine 62, cysteine 74, and cysteine 77. Residues 93 to 96 (DAPG) are G3. GTP contacts are provided by residues 149-152 (NKVD) and 184-186 (SAL). Residues 149–152 (NKVD) form a G4 region. A G5 region spans residues 184–186 (SAL).

The protein belongs to the TRAFAC class translation factor GTPase superfamily. Classic translation factor GTPase family. EIF2G subfamily. Heterotrimer composed of an alpha, a beta and a gamma chain. The cofactor is Mg(2+).

It carries out the reaction GTP + H2O = GDP + phosphate + H(+). EIF-2 functions in the early steps of protein synthesis by forming a ternary complex with GTP and initiator tRNA. This Sulfurisphaera tokodaii (strain DSM 16993 / JCM 10545 / NBRC 100140 / 7) (Sulfolobus tokodaii) protein is Translation initiation factor 2 subunit gamma.